A 266-amino-acid polypeptide reads, in one-letter code: Putative carbamate hydrolase RutD (266 aa).

Positions 14-238 (PVVVLSAGLG…RVEMPWGGHA (225 aa)) constitute an AB hydrolase-1 domain.

Belongs to the AB hydrolase superfamily. Hydrolase RutD family.

The enzyme catalyses carbamate + 2 H(+) = NH4(+) + CO2. Functionally, involved in pyrimidine catabolism. May facilitate the hydrolysis of carbamate, a reaction that can also occur spontaneously. This chain is Putative carbamate hydrolase RutD, found in Klebsiella pneumoniae (strain 342).